The following is a 108-amino-acid chain: uncharacterized protein (108 aa).

The disordered stretch occupies residues 56–108 (ELPSRGCLPAPRPESGQGRLSTGISQNGGRSSAQPCPRCIAGESGHFSHTKNH). The span at 73–89 (GRLSTGISQNGGRSSAQ) shows a compositional bias: polar residues.

This is an uncharacterized protein from Homo sapiens (Human).